A 127-amino-acid chain; its full sequence is MKYMVSFDQERMLKPAVIGGIINGILGAICCLCYVIGGAVAAHLYVNAGGICDYENCGLVGAISGVIGGVIASILSFLFMSAYLSALGLKAAMFTGASFIIGFITAIIFGAILGAVGGVIYVVIKNR.

Helical transmembrane passes span 16–36 (AVIG…CYVI), 59–79 (LVGA…SFLF), and 100–120 (IIGF…GGVI).

The protein resides in the cell membrane. This is an uncharacterized protein from Methanocaldococcus jannaschii (strain ATCC 43067 / DSM 2661 / JAL-1 / JCM 10045 / NBRC 100440) (Methanococcus jannaschii).